The following is a 163-amino-acid chain: MAKKNAKKSKNPPATIARNKRANFDYKFEEKFEAGLSLMGWEVKSIRVGKVNLSESYVFLRDGEAYLFGCTITPLNTASTHVVCDPMRDRKLLLNRRELDKLQGLVERQGYSIVPISMYWRKNAWVKLEIGLGKGKKEHDKRDDTKEREWKIEKSRTMKHAAR.

Positions 135 to 156 are enriched in basic and acidic residues; that stretch reads GKKEHDKRDDTKEREWKIEKSR. The interval 135 to 163 is disordered; that stretch reads GKKEHDKRDDTKEREWKIEKSRTMKHAAR.

It belongs to the SmpB family.

The protein resides in the cytoplasm. Functionally, required for rescue of stalled ribosomes mediated by trans-translation. Binds to transfer-messenger RNA (tmRNA), required for stable association of tmRNA with ribosomes. tmRNA and SmpB together mimic tRNA shape, replacing the anticodon stem-loop with SmpB. tmRNA is encoded by the ssrA gene; the 2 termini fold to resemble tRNA(Ala) and it encodes a 'tag peptide', a short internal open reading frame. During trans-translation Ala-aminoacylated tmRNA acts like a tRNA, entering the A-site of stalled ribosomes, displacing the stalled mRNA. The ribosome then switches to translate the ORF on the tmRNA; the nascent peptide is terminated with the 'tag peptide' encoded by the tmRNA and targeted for degradation. The ribosome is freed to recommence translation, which seems to be the essential function of trans-translation. The protein is SsrA-binding protein of Shewanella loihica (strain ATCC BAA-1088 / PV-4).